The following is a 448-amino-acid chain: Putative F-box/LRR-repeat protein At3g44810 (448 aa).

The F-box domain maps to 6 to 54 (TASLNCLPDELLVHVLSSLETKQAASTSVLSKRWRTLFAVRRNLDFDDS). LRR repeat units follow at residues 117–141 (VSELHLCLTSVTRRLHRFPSNVFRS), 143–165 (TLVKLTLGTNLFIVYFPSDTCLP), 190–213 (CPALEDLTIDQKSFPGLPNVVSSK), 228–251 (FDWFRTVALDTPNLVTLLYSTYAR), 290–313 (VRNVQMLHLTSSATEVISQCCKGG), and 421–443 (IVDSKKVQLTEDLMKLPSASSRL).

The sequence is that of Putative F-box/LRR-repeat protein At3g44810 from Arabidopsis thaliana (Mouse-ear cress).